A 156-amino-acid chain; its full sequence is Class I hydrophobin B (156 aa).

Residues 1–18 (MQFTLSAVVLALAGFSAA) form the signal peptide. Intrachain disulfides connect cysteine 52–cysteine 130, cysteine 60–cysteine 124, cysteine 61–cysteine 101, and cysteine 131–cysteine 149.

It belongs to the fungal hydrophobin family.

The protein localises to the secreted. It is found in the cell wall. Its function is as follows. Aerial growth, conidiation, and dispersal of filamentous fungi in the environment rely upon a capability of their secreting small amphipathic proteins called hydrophobins (HPBs) with low sequence identity. Class I can self-assemble into an outermost layer of rodlet bundles on aerial cell surfaces, conferring cellular hydrophobicity that supports fungal growth, development and dispersal; whereas Class II form highly ordered films at water-air interfaces through intermolecular interactions but contribute nothing to the rodlet structure. In P.expansum, hydrophobins contribute to germination, tolerance to cold stress and mycotoxins patulin and citrinin production. HfbA and HfbB are essential for fungal surface hydrophobicity. The protein is Class I hydrophobin B of Penicillium expansum (Blue mold rot fungus).